The primary structure comprises 356 residues: Probable dual-specificity RNA methyltransferase RlmN (356 aa).

The Proton acceptor role is filled by glutamate 100. Residues 106 to 340 (TNSRLTTCVS…VSLRASRGLD (235 aa)) form the Radical SAM core domain. An intrachain disulfide couples cysteine 113 to cysteine 345. Positions 120, 124, and 127 each coordinate [4Fe-4S] cluster. S-adenosyl-L-methionine is bound by residues 167–168 (GE), serine 197, 226–228 (SLH), and asparagine 302. Cysteine 345 acts as the S-methylcysteine intermediate in catalysis.

It belongs to the radical SAM superfamily. RlmN family. Requires [4Fe-4S] cluster as cofactor.

It is found in the cytoplasm. The enzyme catalyses adenosine(2503) in 23S rRNA + 2 reduced [2Fe-2S]-[ferredoxin] + 2 S-adenosyl-L-methionine = 2-methyladenosine(2503) in 23S rRNA + 5'-deoxyadenosine + L-methionine + 2 oxidized [2Fe-2S]-[ferredoxin] + S-adenosyl-L-homocysteine. It carries out the reaction adenosine(37) in tRNA + 2 reduced [2Fe-2S]-[ferredoxin] + 2 S-adenosyl-L-methionine = 2-methyladenosine(37) in tRNA + 5'-deoxyadenosine + L-methionine + 2 oxidized [2Fe-2S]-[ferredoxin] + S-adenosyl-L-homocysteine. Its function is as follows. Specifically methylates position 2 of adenine 2503 in 23S rRNA and position 2 of adenine 37 in tRNAs. This is Probable dual-specificity RNA methyltransferase RlmN from Prochlorococcus marinus (strain MIT 9211).